The chain runs to 460 residues: GTPase Der (460 aa).

EngA-type G domains follow at residues 4 to 174 and 184 to 361; these read PQVA…PRRE and PKIA…AERS. GTP-binding positions include 10–17, 57–61, 126–129, 190–197, 237–241, and 302–305; these read GRPNVGKS, DTGGL, NKAE, DTAGI, and NKWD. The region spanning 362–446 is the KH-like domain; the sequence is RRIPTAELNQ…PIELVFRERE (85 aa).

This sequence belongs to the TRAFAC class TrmE-Era-EngA-EngB-Septin-like GTPase superfamily. EngA (Der) GTPase family. In terms of assembly, associates with the 50S ribosomal subunit.

GTPase that plays an essential role in the late steps of ribosome biogenesis. The protein is GTPase Der of Thermomicrobium roseum (strain ATCC 27502 / DSM 5159 / P-2).